Consider the following 386-residue polypeptide: Protein lin-8 (386 aa).

The interval 175-285 is sufficient for interaction with lin-35; the sequence is LGLEARRASK…FSQQYGGGGS (111 aa). Positions 212–240 are disordered; the sequence is EEPYEETGSNWSDPAPEPSQSKSQSPEAK. The segment covering 229–240 has biased composition (low complexity); the sequence is PSQSKSQSPEAK.

Belongs to the lin-8 family. In terms of assembly, interacts with lin-35 (via C-terminus). As to expression, widely expressed throughout development, with particularly prominent expression in the germline and in neuronal nuclei of the head (at protein level).

The protein localises to the nucleus. Functionally, acts as a synthetic multivulva class A (synMuvA) protein and redundantly inhibits lin-3/EGF expression to prevent inappropriate vulva induction. The protein is Protein lin-8 of Caenorhabditis elegans.